The following is a 217-amino-acid chain: Protein 33K (217 aa).

Positions 1-142 (MPPKGNKQAI…KEKTSAIATR (142 aa)) are disordered. Residues 24 to 68 (QWDEEEESWDDSQAEEVSDEEEMESWESLDEELEDKPPKDEEEEI) show a composition bias toward acidic residues. Low complexity predominate over residues 69–78 (IASAAAPSSK). Positions 123 to 136 (KRSEKTTRPRKEKT) are enriched in basic and acidic residues. The interval 160–187 (YAIFQQSRGQQLELKVKNRSLRSLTRSC) is necessary for nuclear subcellular location. The tract at residues 166–186 (SRGQQLELKVKNRSLRSLTRS) is RS-repeat; required for splicing enhancer activity.

This sequence belongs to the adenoviridae splicing factor family. Homooligomer. Interacts with DBP; this interaction occurs at a unique vertex during genome packaging. Interacts with IVa2; this interaction occurs at a unique vertex during genome packaging and seems to potentiate IVa2 and 33K oligomerization. Post-translationally, phosphorylated in vitro by human PKA and PRKDC. PRKDC inhibits, whereas PKA activates the splicing factor.

The protein localises to the host nucleus. Its function is as follows. Promotes alternative splicing of late transcripts by promoting splicing at weak 3' splice sites. Required for the temporal activation of major late pre-mRNA splicing at late times of infection. Induces the splicing and expression of the late capsid vertex protein. In terms of biological role, probably functions as the small terminase that is part of the molecular motor that translocates genomic DNA in empty capsid during DNA packaging. This motor is located at a unique vertex and comprises at least the IVa2 ATPase, the small terminase 33K and probably a portal. Forms a ring-like structure of about 17 nm in which genomic DNA is translocated into the capsid. Stimulates IVa2 ATPase activity in the presence of the viral genome. Once the DNA is packaged, the terminase detaches: the 33K protein is present in the empty particles, but not in the mature virions. Also involved in virion assembly. This is Protein 33K from Human adenovirus F serotype 41 (HAdV-41).